A 570-amino-acid chain; its full sequence is Sorting nexin-41 (570 aa).

2 disordered regions span residues 1-31 and 81-115; these read MSDF…PSAS and FDDG…TTAS. Positions 84 to 101 are enriched in polar residues; it reads GSNSFSATPTASITNQND. Positions 98–236 constitute a PX domain; that stretch reads NQNDTAHEAT…RFLDPHASWS (139 aa). A 1,2-diacyl-sn-glycero-3-phospho-(1D-myo-inositol-3-phosphate)-binding residues include Arg-153, Ser-155, Lys-179, and Arg-202. The disordered stretch occupies residues 429-498; the sequence is DSQRINDALG…ASRRQGIGKT (70 aa). A compositionally biased stretch (polar residues) spans 440–454; sequence TRSNNGPSTTNSGEQ. Positions 455–464 are enriched in low complexity; that stretch reads PSASPAPKKS.

Belongs to the sorting nexin family.

It is found in the endosome membrane. The protein localises to the endomembrane system. In terms of biological role, may be required for cytoplasm to vacuole transport (Cvt) and pexophagy. The protein is Sorting nexin-41 (SNX41) of Yarrowia lipolytica (strain CLIB 122 / E 150) (Yeast).